Reading from the N-terminus, the 107-residue chain is MVAPKIRIKLRGFDHKALDQSASKIVDTVRRTGADVSGPVPLPTRIRRFTVLRSPFKYKDSREHFEIRTHNRLVDIMNPTKKTIDSLMTLDLPTGVDIEIKTVGGRA.

The protein belongs to the universal ribosomal protein uS10 family. Part of the 30S ribosomal subunit.

In terms of biological role, involved in the binding of tRNA to the ribosomes. The chain is Small ribosomal subunit protein uS10 from Deinococcus geothermalis (strain DSM 11300 / CIP 105573 / AG-3a).